Here is a 361-residue protein sequence, read N- to C-terminus: Chorismate synthase (361 aa).

Residues Arg48 and Arg54 each contribute to the NADP(+) site. FMN is bound by residues 131–133, 243–244, Gly287, 302–306, and Arg328; these read RSS, NA, and KPTSS.

The protein belongs to the chorismate synthase family. Homotetramer. The cofactor is FMNH2.

It catalyses the reaction 5-O-(1-carboxyvinyl)-3-phosphoshikimate = chorismate + phosphate. It participates in metabolic intermediate biosynthesis; chorismate biosynthesis; chorismate from D-erythrose 4-phosphate and phosphoenolpyruvate: step 7/7. Functionally, catalyzes the anti-1,4-elimination of the C-3 phosphate and the C-6 proR hydrogen from 5-enolpyruvylshikimate-3-phosphate (EPSP) to yield chorismate, which is the branch point compound that serves as the starting substrate for the three terminal pathways of aromatic amino acid biosynthesis. This reaction introduces a second double bond into the aromatic ring system. This Rhodopseudomonas palustris (strain BisA53) protein is Chorismate synthase.